A 325-amino-acid chain; its full sequence is tRNA (guanine-N(7)-)-methyltransferase (325 aa).

A disordered region spans residues 1-101 (MSEATDKQKQ…LEYPKSPESM (101 aa)). Positions 51–69 (VSTTPEPEQSDSSATTATI) are enriched in polar residues. Residues glycine 122, 145–146 (EI), 199–200 (NA), and cysteine 219 contribute to the S-adenosyl-L-methionine site. The active site involves aspartate 222. 297-299 (TEE) serves as a coordination point for S-adenosyl-L-methionine.

This sequence belongs to the class I-like SAM-binding methyltransferase superfamily. TrmB family. As to quaternary structure, forms a complex with TRM82.

The protein resides in the nucleus. The enzyme catalyses guanosine(46) in tRNA + S-adenosyl-L-methionine = N(7)-methylguanosine(46) in tRNA + S-adenosyl-L-homocysteine. It participates in tRNA modification; N(7)-methylguanine-tRNA biosynthesis. In terms of biological role, catalyzes the formation of N(7)-methylguanine at position 46 (m7G46) in tRNA. The sequence is that of tRNA (guanine-N(7)-)-methyltransferase from Candida albicans (strain SC5314 / ATCC MYA-2876) (Yeast).